The chain runs to 637 residues: Chloride intracellular channel protein 6 (637 aa).

The segment at 1 to 400 (MAETAEPEGG…EASEEGDPGQ (400 aa)) is disordered. Over residues 35–63 (GPEASEGAAKAPSGEGAGAAAKAGATEEA) the composition is skewed to low complexity. Residue Ser39 is modified to Phosphoserine. The segment covering 126–137 (CELRGEAAREAE) has biased composition (basic and acidic residues). A compositionally biased stretch (low complexity) spans 138-152 (GQAAAPAAPGAQEEA). Repeat copies occupy residues 155 to 160 (GDSVDA), 161 to 166 (EGSIDA), 167 to 172 (GGSVDA), 173 to 178 (AGSVDA), 179 to 184 (GGSIDA), 185 to 190 (GGSMDA), 191 to 196 (GGSVDA), 197 to 202 (GGSIDT), 203 to 208 (GGSVDA), 209 to 214 (AGSVDA), 215 to 220 (GGSIDT), 221 to 226 (GRNVDA), 227 to 232 (GGSIDA), 233 to 238 (GGSVDA), and 239 to 244 (GGSMDA). The interval 155–244 (GDSVDAEGSI…SVDAGGSMDA (90 aa)) is 15 X 6 AA tandem repeat of [GEA]-[DGR]-[SN]-[VIM]-D-[AT]. The segment covering 247-256 (PAGGAHGAGG) has biased composition (gly residues). Residues 305–314 (GSEDAAGEDG) are compositionally biased toward acidic residues. Basic and acidic residues predominate over residues 315-332 (DQGRPQEETEQQAERQEP). Residues Ser348 and Ser393 each carry the phosphoserine modification. Positions 420–423 (CPFS) match the G-site motif. The helical transmembrane segment at 422 to 442 (FSQRLFMILWLKGVIFNVTTV) threads the bilayer. The GST C-terminal domain occupies 466 to 637 (DGDVKTDVNK…AYSDVAKRMK (172 aa)).

Belongs to the chloride channel CLIC family. As to quaternary structure, monomer (soluble state). Interacts with dopamine receptors DRD2, DRD3 and DRD4. Phosphorylated. Expressed in brain, chorioretinal, lacrimal glands, submandibular glands, airway epithelium, kidney and gastric mucosa, where it is preferentially expressed in cells that secrete or transport water. In brain, it is highly expressed in choroid plexus. Not detected in pancreas, adrenal glands, heart, skeletal muscle, ileal mucosa, liver and lung.

Its subcellular location is the cytoplasm. It is found in the cell membrane. It catalyses the reaction chloride(in) = chloride(out). With respect to regulation, channel activity is redox- and pH-regulated. Inhibited by IAA-94. Its function is as follows. In the soluble state, catalyzes glutaredoxin-like thiol disulfide exchange reactions with reduced glutathione as electron donor. Can insert into membranes and form voltage-dependent chloride-selective channels. The channel opens upon membrane depolarization at positive voltages and closes at negative membrane voltages. May play a critical role in water-secreting cells, possibly through the regulation of chloride ion transport. The polypeptide is Chloride intracellular channel protein 6 (CLIC6) (Oryctolagus cuniculus (Rabbit)).